Reading from the N-terminus, the 149-residue chain is ER export of PMA1 protein 1 (149 aa).

The Lumenal portion of the chain corresponds to 1–6 (MNLYGY). The helical; Signal-anchor for type II membrane protein transmembrane segment at 7–27 (FLLLIIVIAFIALLPLFSGIG) threads the bilayer. The Cytoplasmic segment spans residues 28–149 (TFKLTKPKSS…KKNEAYEGFV (122 aa)).

As to quaternary structure, interacts with PMA1 and PSG1.

The protein resides in the endoplasmic reticulum membrane. Its subcellular location is the cytoplasmic vesicle. It localises to the COPI-coated vesicle membrane. It is found in the COPII-coated vesicle membrane. The protein localises to the golgi apparatus membrane. Specific cargo receptor protein for the plasma membrane ATPase PMA1 that acts with PSG1 to promote the transport and maturation of PMA1. EXP1 and PSG1 probably act sequentially to promote PMA1 sorting between the ER and the Golgi, with EXP1 promoting PMA1 export from the ER to the Golgi while PSG1 has a role in PMA1 maturation or quality control in the Golgi. This Saccharomyces cerevisiae (strain ATCC 204508 / S288c) (Baker's yeast) protein is ER export of PMA1 protein 1.